Reading from the N-terminus, the 253-residue chain is 5'/3'-nucleotidase SurE (253 aa).

Asp-8, Asp-9, Ser-39, and Asn-92 together coordinate a divalent metal cation.

The protein belongs to the SurE nucleotidase family. A divalent metal cation serves as cofactor.

It localises to the cytoplasm. It catalyses the reaction a ribonucleoside 5'-phosphate + H2O = a ribonucleoside + phosphate. It carries out the reaction a ribonucleoside 3'-phosphate + H2O = a ribonucleoside + phosphate. The enzyme catalyses [phosphate](n) + H2O = [phosphate](n-1) + phosphate + H(+). Its function is as follows. Nucleotidase with a broad substrate specificity as it can dephosphorylate various ribo- and deoxyribonucleoside 5'-monophosphates and ribonucleoside 3'-monophosphates with highest affinity to 3'-AMP. Also hydrolyzes polyphosphate (exopolyphosphatase activity) with the preference for short-chain-length substrates (P20-25). Might be involved in the regulation of dNTP and NTP pools, and in the turnover of 3'-mononucleotides produced by numerous intracellular RNases (T1, T2, and F) during the degradation of various RNAs. This Sodalis glossinidius (strain morsitans) protein is 5'/3'-nucleotidase SurE.